Consider the following 306-residue polypeptide: tRNA pseudouridine synthase B (306 aa).

The active-site Nucleophile is Asp48.

It belongs to the pseudouridine synthase TruB family. Type 1 subfamily.

The catalysed reaction is uridine(55) in tRNA = pseudouridine(55) in tRNA. Its function is as follows. Responsible for synthesis of pseudouridine from uracil-55 in the psi GC loop of transfer RNAs. This Haemophilus influenzae (strain 86-028NP) protein is tRNA pseudouridine synthase B.